The following is a 627-amino-acid chain: Zinc finger MYM-type protein 5 (627 aa).

Positions methionine 1–arginine 23 are disordered. Over residues glycine 12–arginine 23 the composition is skewed to polar residues. Lysine 59 is covalently cross-linked (Glycyl lysine isopeptide (Lys-Gly) (interchain with G-Cter in SUMO2)). The segment at aspartate 91 to asparagine 123 is disordered. Residues lysine 137 and lysine 195 each participate in a glycyl lysine isopeptide (Lys-Gly) (interchain with G-Cter in SUMO2) cross-link. An MYM-type 1 zinc finger spans residues histidine 234–threonine 268. The MYM-type 2; degenerate zinc finger occupies glutamine 280 to isoleucine 319. 2 MYM-type zinc fingers span residues histidine 326–tyrosine 354 and lysine 370–asparagine 396. The disordered stretch occupies residues glutamate 405–glutamate 429. Residues lysine 408, lysine 427, and lysine 517 each participate in a glycyl lysine isopeptide (Lys-Gly) (interchain with G-Cter in SUMO2) cross-link.

In terms of assembly, interacts (via N-terminal 120 amino acid region) with ETV5 (via C-terminal).

Its subcellular location is the nucleus. In terms of biological role, functions as a transcriptional regulator. In Mus musculus (Mouse), this protein is Zinc finger MYM-type protein 5 (Zmym5).